The following is a 271-amino-acid chain: GPN-loop GTPase 3 (271 aa).

A GTP-binding site is contributed by 13 to 18 (GAGKST). The short motif at 70–72 (GPN) is the Gly-Pro-Asn (GPN)-loop; involved in dimer interface element. GTP is bound at residue 173–176 (SKVD).

The protein belongs to the GPN-loop GTPase family. Heterodimers with GPN1 or GPN2. Binds to RNA polymerase II (RNAPII).

Its function is as follows. Small GTPase required for proper nuclear import of RNA polymerase II and III (RNAPII and RNAPIII). May act at an RNAP assembly step prior to nuclear import. The sequence is that of GPN-loop GTPase 3 from Eremothecium gossypii (strain ATCC 10895 / CBS 109.51 / FGSC 9923 / NRRL Y-1056) (Yeast).